The primary structure comprises 204 residues: UPF0637 protein lwe1043 (204 aa).

It belongs to the UPF0637 family.

In Listeria welshimeri serovar 6b (strain ATCC 35897 / DSM 20650 / CCUG 15529 / CIP 8149 / NCTC 11857 / SLCC 5334 / V8), this protein is UPF0637 protein lwe1043.